Reading from the N-terminus, the 82-residue chain is MSGKNEFNIFKHVLVPEHRILSEEEKKALLEKYKITPAQLPQIRASDPAVKALGAKPGDIIEIKRRSPTAGVYYYYRVVVED.

It belongs to the archaeal Rpo5/eukaryotic RPB5 RNA polymerase subunit family. Part of the RNA polymerase complex.

It is found in the cytoplasm. The enzyme catalyses RNA(n) + a ribonucleoside 5'-triphosphate = RNA(n+1) + diphosphate. Functionally, DNA-dependent RNA polymerase (RNAP) catalyzes the transcription of DNA into RNA using the four ribonucleoside triphosphates as substrates. This Pyrococcus horikoshii (strain ATCC 700860 / DSM 12428 / JCM 9974 / NBRC 100139 / OT-3) protein is DNA-directed RNA polymerase subunit Rpo5.